The primary structure comprises 154 residues: Transcriptional repressor NrdR (154 aa).

A zinc finger lies at 3–34; it reads CPFCGNENTRVIDTRAAEDGFAIKRRRECENC. The region spanning 49 to 139 is the ATP-cone domain; the sequence is LIVVKKDGSK…VYRQFKDVNS (91 aa).

It belongs to the NrdR family. Zn(2+) is required as a cofactor.

Functionally, negatively regulates transcription of bacterial ribonucleotide reductase nrd genes and operons by binding to NrdR-boxes. The sequence is that of Transcriptional repressor NrdR from Carboxydothermus hydrogenoformans (strain ATCC BAA-161 / DSM 6008 / Z-2901).